Consider the following 72-residue polypeptide: Phaiodotoxin-2 (72 aa).

The LCN-type CS-alpha/beta domain occupies 1–72 (KFIRHKDESF…CFGALESKCA (72 aa)). 4 disulfides stabilise this stretch: C13-C38, C23-C50, C27-C52, and C63-C71.

This sequence belongs to the long (4 C-C) scorpion toxin superfamily. Sodium channel inhibitor family. As to expression, expressed by the venom gland.

The protein localises to the secreted. In terms of biological role, sodium channel (Nav) specific neurotoxin. The chain is Phaiodotoxin-2 from Anuroctonus phaiodactylus (Mafia scorpion).